The chain runs to 491 residues: MNTQDLAKLRSIVPEMRRVRHIHFVGIGGAGMGGIAEVLANEGYQISGSDLAPNPVTQQLSQLGATIYFNHRPENVRDASVVVVSSAISADNPEIVAAHEARIPVIRRAEMLAELMRFRHGIAIAGTHGKTTTTAMVSSIYAEAGLDPTFVNGGLVKAAGVHARLGHSRYLIAEADESDASFLHLQPMVAIVTNIEADHMDTYHGDFENLKQTFINFLHNLPFYGRAVMCVDDPVIRELLPRVGRQITTYGFSDDADVRVEDYRQVGAQGHFRLVRQDKAILQVTLNAPGRHNALNAAAAVAVATEEGIDDRAILRALESFQGTGRRFDFLGEFPLAEVNGKPGSAMLIDDYGHHPTEVDATIKAARAGWPDKNLVMVFQPHRYTRTRDLYDDFANVLTQVDALLMLDVYPAGEAPIPGADSRSLCRTIRGRGKVDPILVPDSTQAAEMLASVLTGNDLVLVQGAGNIGKIARHLAEIKLIPQKTEEERHG.

Residue 126-132 (GTHGKTT) coordinates ATP.

It belongs to the MurCDEF family.

It localises to the cytoplasm. The enzyme catalyses UDP-N-acetyl-alpha-D-muramate + L-alanine + ATP = UDP-N-acetyl-alpha-D-muramoyl-L-alanine + ADP + phosphate + H(+). Its pathway is cell wall biogenesis; peptidoglycan biosynthesis. Cell wall formation. This chain is UDP-N-acetylmuramate--L-alanine ligase, found in Klebsiella pneumoniae subsp. pneumoniae (strain ATCC 700721 / MGH 78578).